A 916-amino-acid chain; its full sequence is Translation initiation factor IF-2 (916 aa).

The disordered stretch occupies residues 58 to 317; that stretch reads LEAEGHLPGA…GVTVPRGDGG (260 aa). Residues 120 to 142 show a composition bias toward low complexity; sequence EKVAASEAADAKPAAGAPADTAK. Residues 195 to 206 are compositionally biased toward pro residues; the sequence is SNIPRPAPPRPG. Composition is skewed to gly residues over residues 214–227 and 235–282; these read RPGGGQRQGGGGRP and SAGG…GRGG. A compositionally biased stretch (basic residues) spans 283–294; it reads GKSKARKSKRAK. Residues 409-583 enclose the tr-type G domain; that stretch reads IRPPVVTVMG…LTADAGLDLR (175 aa). A G1 region spans residues 418–425; it reads GHVDHGKT. 418 to 425 contributes to the GTP binding site; it reads GHVDHGKT. The interval 443-447 is G2; that stretch reads GITQH. The segment at 468–471 is G3; it reads DTPG. GTP contacts are provided by residues 468 to 472 and 522 to 525; these read DTPGH and NKVD. Positions 522–525 are G4; the sequence is NKVD. Positions 558 to 560 are G5; sequence SAR.

This sequence belongs to the TRAFAC class translation factor GTPase superfamily. Classic translation factor GTPase family. IF-2 subfamily.

It is found in the cytoplasm. Functionally, one of the essential components for the initiation of protein synthesis. Protects formylmethionyl-tRNA from spontaneous hydrolysis and promotes its binding to the 30S ribosomal subunits. Also involved in the hydrolysis of GTP during the formation of the 70S ribosomal complex. The protein is Translation initiation factor IF-2 of Leifsonia xyli subsp. xyli (strain CTCB07).